Here is a 153-residue protein sequence, read N- to C-terminus: ORM1-like protein 2 (153 aa).

Over 1-21 (MNVGVAHSEVNPNTRVMNSRG) the chain is Cytoplasmic. Helical transmembrane passes span 22–42 (IWLA…SIPF) and 43–63 (FSIP…TYVF). Residues 64-105 (LHTVKGTPFETPDQGKARLLTHWEQMDYGLQFTSSRKFLSIS) lie on the Cytoplasmic side of the membrane. The chain crosses the membrane as a helical span at residues 106 to 126 (PIVLYLLASFYTKYDAAHFLI). Topologically, residues 127 to 153 (NTASLLSVLLPKLPQFHGVRVFGINKY) are extracellular.

The protein belongs to the ORM family. Ceramide-sensitive subunit of the serine palmitoyltransferase (SPT) complex, which is also composed of SPTLC1, SPTLC2/3 and SPTSSA/B. Widely expressed. Expressed in adult and fetal heart, brain, lung, liver, skeletal muscle and kidney. Expressed in adult pancreas and placenta and in fetal spleen abd thymus.

It localises to the endoplasmic reticulum membrane. In terms of biological role, plays an essential role in the homeostatic regulation of sphingolipid de novo biosynthesis by modulating the activity of the serine palmitoyltransferase (SPT) in response to ceramide levels. When complexed to SPT, the binding of ceramides to its N-terminus stabilizes a conformation that block SPT substrate entry, hence preventing SPT catalytic activity. Through this mechanism, maintains ceramide levels at sufficient concentrations for the production of complex sphingolipids, but which prevents the accumulation of ceramides to levels that trigger apoptosis. In Homo sapiens (Human), this protein is ORM1-like protein 2 (ORMDL2).